The following is a 134-amino-acid chain: DNA-directed RNA polymerase subunit omega (134 aa).

It belongs to the RNA polymerase subunit omega family. As to quaternary structure, the RNAP catalytic core consists of 2 alpha, 1 beta, 1 beta' and 1 omega subunit. When a sigma factor is associated with the core the holoenzyme is formed, which can initiate transcription.

The catalysed reaction is RNA(n) + a ribonucleoside 5'-triphosphate = RNA(n+1) + diphosphate. Promotes RNA polymerase assembly. Latches the N- and C-terminal regions of the beta' subunit thereby facilitating its interaction with the beta and alpha subunits. The sequence is that of DNA-directed RNA polymerase subunit omega from Brucella anthropi (strain ATCC 49188 / DSM 6882 / CCUG 24695 / JCM 21032 / LMG 3331 / NBRC 15819 / NCTC 12168 / Alc 37) (Ochrobactrum anthropi).